The chain runs to 321 residues: Gap junction delta-2 protein (321 aa).

The Cytoplasmic portion of the chain corresponds to 1-19 (MGEWTILERLLEAAVQQHS). A helical transmembrane segment spans residues 20-42 (TMIGRILLTVVVIFRILIVAIVG). Topologically, residues 43–75 (ETVYDDEQTMFVCNTLQPGCNQACYDRAFPISH) are extracellular. The helical transmembrane segment at 76 to 98 (IRYWVFQIIMVCTPSLCFITYSV) threads the bilayer. Topologically, residues 99–197 (HQSAKQRERR…KLRRQEGISR (99 aa)) are cytoplasmic. Positions 120-141 (PAESIGGPGGTGGGGSGGSKRE) are disordered. Over residues 125 to 137 (GGPGGTGGGGSGG) the composition is skewed to gly residues. A helical membrane pass occupies residues 198–220 (FYIIQVVFRNALEIGFLVGQYFL). The Extracellular segment spans residues 221-252 (YGFSVPGLYECNRYPCIKEVECYVSRPTEKTV). A helical transmembrane segment spans residues 253–275 (FLVFMFAVSGICVVLNLAELNHL). Residues 276 to 321 (GWRKIKLAVRGAQAKRKSVYEIRNKDLPRVSVPNFGRTQSSDSAYV) are Cytoplasmic-facing.

The protein belongs to the connexin family. Delta-type subfamily. As to quaternary structure, a connexon is composed of a hexamer of connexins. As to expression, highly expressed in neurons.

It localises to the cell membrane. It is found in the cell junction. Its subcellular location is the gap junction. Its function is as follows. One gap junction consists of a cluster of closely packed pairs of transmembrane channels, the connexons, through which materials of low MW diffuse from one cell to a neighboring cell. This chain is Gap junction delta-2 protein (Gjd2), found in Rattus norvegicus (Rat).